A 156-amino-acid chain; its full sequence is 6,7-dimethyl-8-ribityllumazine synthase (156 aa).

5-amino-6-(D-ribitylamino)uracil contacts are provided by residues F22, 56–58 (AFE), and 80–82 (AVV). 85 to 86 (ET) contributes to the (2S)-2-hydroxy-3-oxobutyl phosphate binding site. The Proton donor role is filled by H88. F113 provides a ligand contact to 5-amino-6-(D-ribitylamino)uracil. (2S)-2-hydroxy-3-oxobutyl phosphate is bound at residue R127.

This sequence belongs to the DMRL synthase family.

It catalyses the reaction (2S)-2-hydroxy-3-oxobutyl phosphate + 5-amino-6-(D-ribitylamino)uracil = 6,7-dimethyl-8-(1-D-ribityl)lumazine + phosphate + 2 H2O + H(+). It functions in the pathway cofactor biosynthesis; riboflavin biosynthesis; riboflavin from 2-hydroxy-3-oxobutyl phosphate and 5-amino-6-(D-ribitylamino)uracil: step 1/2. In terms of biological role, catalyzes the formation of 6,7-dimethyl-8-ribityllumazine by condensation of 5-amino-6-(D-ribitylamino)uracil with 3,4-dihydroxy-2-butanone 4-phosphate. This is the penultimate step in the biosynthesis of riboflavin. This chain is 6,7-dimethyl-8-ribityllumazine synthase, found in Pediococcus pentosaceus (strain ATCC 25745 / CCUG 21536 / LMG 10740 / 183-1w).